Consider the following 176-residue polypeptide: ADP-ribosylation factor-like protein 11 (176 aa).

Glycine 2 is lipidated: N-myristoyl glycine. GTP-binding positions include 19–26 (GLDSAGKT), 63–67 (DIGGQ), and 122–125 (NKQE).

It belongs to the small GTPase superfamily. Arf family.

In terms of biological role, may play a role in apoptosis. May act as a tumor suppressor. The polypeptide is ADP-ribosylation factor-like protein 11 (Arl11) (Mus musculus (Mouse)).